A 180-amino-acid polypeptide reads, in one-letter code: Protein NEQ441 (180 aa).

An AMMECR1 domain is found at 1–180 (MNLAKIARKI…VFEGQIFEED (180 aa)).

The polypeptide is Protein NEQ441 (Nanoarchaeum equitans (strain Kin4-M)).